The following is a 500-amino-acid chain: Probable cytosol aminopeptidase 1 (500 aa).

Mn(2+) contacts are provided by lysine 263 and aspartate 268. Residue lysine 275 is part of the active site. Residues aspartate 287, aspartate 346, and glutamate 348 each coordinate Mn(2+). The active site involves arginine 350.

Belongs to the peptidase M17 family. Mn(2+) is required as a cofactor.

It is found in the cytoplasm. The catalysed reaction is Release of an N-terminal amino acid, Xaa-|-Yaa-, in which Xaa is preferably Leu, but may be other amino acids including Pro although not Arg or Lys, and Yaa may be Pro. Amino acid amides and methyl esters are also readily hydrolyzed, but rates on arylamides are exceedingly low.. The enzyme catalyses Release of an N-terminal amino acid, preferentially leucine, but not glutamic or aspartic acids.. Functionally, presumably involved in the processing and regular turnover of intracellular proteins. Catalyzes the removal of unsubstituted N-terminal amino acids from various peptides. This is Probable cytosol aminopeptidase 1 (pepA1) from Shewanella oneidensis (strain ATCC 700550 / JCM 31522 / CIP 106686 / LMG 19005 / NCIMB 14063 / MR-1).